The following is a 140-amino-acid chain: ATP synthase epsilon chain (140 aa).

This sequence belongs to the ATPase epsilon chain family. In terms of assembly, F-type ATPases have 2 components, CF(1) - the catalytic core - and CF(0) - the membrane proton channel. CF(1) has five subunits: alpha(3), beta(3), gamma(1), delta(1), epsilon(1). CF(0) has three main subunits: a, b and c.

It localises to the cell inner membrane. Its function is as follows. Produces ATP from ADP in the presence of a proton gradient across the membrane. The protein is ATP synthase epsilon chain of Pseudoalteromonas translucida (strain TAC 125).